The sequence spans 545 residues: CTP synthase (545 aa).

Residues 1-266 form an amidoligase domain region; it reads MTTRYIFVTG…DDLVVKRFGL (266 aa). A CTP-binding site is contributed by Ser14. Residue Ser14 coordinates UTP. Residues 15–20 and Asp72 contribute to the ATP site; that span reads SLGKGI. Residues Asp72 and Glu140 each contribute to the Mg(2+) site. CTP is bound by residues 147–149, 187–192, and Lys223; these read DIE and KTKPTQ. UTP-binding positions include 187 to 192 and Lys223; that span reads KTKPTQ. Position 239 to 241 (239 to 241) interacts with ATP; sequence KDV. The Glutamine amidotransferase type-1 domain maps to 291–542; that stretch reads VIGMVGKYIE…IAAASAHQKR (252 aa). Gly352 provides a ligand contact to L-glutamine. Residue Cys379 is the Nucleophile; for glutamine hydrolysis of the active site. Residues 380-383, Glu403, and Arg470 contribute to the L-glutamine site; that span reads LGMQ. Active-site residues include His515 and Glu517.

The protein belongs to the CTP synthase family. Homotetramer.

It catalyses the reaction UTP + L-glutamine + ATP + H2O = CTP + L-glutamate + ADP + phosphate + 2 H(+). The enzyme catalyses L-glutamine + H2O = L-glutamate + NH4(+). The catalysed reaction is UTP + NH4(+) + ATP = CTP + ADP + phosphate + 2 H(+). The protein operates within pyrimidine metabolism; CTP biosynthesis via de novo pathway; CTP from UDP: step 2/2. Its activity is regulated as follows. Allosterically activated by GTP, when glutamine is the substrate; GTP has no effect on the reaction when ammonia is the substrate. The allosteric effector GTP functions by stabilizing the protein conformation that binds the tetrahedral intermediate(s) formed during glutamine hydrolysis. Inhibited by the product CTP, via allosteric rather than competitive inhibition. In terms of biological role, catalyzes the ATP-dependent amination of UTP to CTP with either L-glutamine or ammonia as the source of nitrogen. Regulates intracellular CTP levels through interactions with the four ribonucleotide triphosphates. The chain is CTP synthase from Shewanella baltica (strain OS155 / ATCC BAA-1091).